Reading from the N-terminus, the 272-residue chain is Pyridoxal phosphate phosphatase YbhA (272 aa).

Aspartate 9 (nucleophile) is an active-site residue. Residue aspartate 9 participates in Mg(2+) binding. Residue leucine 10 coordinates phosphate. Aspartate 11 contributes to the Mg(2+) binding site. Residues threonine 43–glycine 44 and lysine 200 each bind phosphate. Aspartate 223 contributes to the Mg(2+) binding site. Residue asparagine 226 coordinates phosphate.

This sequence belongs to the HAD-like hydrolase superfamily. CbbY/CbbZ/Gph/YieH family. The cofactor is Mg(2+). Requires Mn(2+) as cofactor. Co(2+) is required as a cofactor. It depends on Zn(2+) as a cofactor.

The catalysed reaction is pyridoxal 5'-phosphate + H2O = pyridoxal + phosphate. In terms of biological role, catalyzes the dephosphorylation of pyridoxal-phosphate (PLP). Can also hydrolyze erythrose-4-phosphate (Ery4P) and fructose-1,6-bis-phosphate (Fru1,6bisP). This Escherichia coli (strain K12) protein is Pyridoxal phosphate phosphatase YbhA (ybhA).